The sequence spans 290 residues: D-tagatose-1,6-bisphosphate aldolase subunit KbaY (290 aa).

Asp-82 acts as the Proton donor in catalysis. Positions 83 and 180 each coordinate Zn(2+). Gly-181 contacts dihydroxyacetone phosphate. A Zn(2+)-binding site is contributed by His-208. Residues 209–211 (GAS) and 230–233 (NVAT) each bind dihydroxyacetone phosphate.

Belongs to the class II fructose-bisphosphate aldolase family. TagBP aldolase KbaY subfamily. As to quaternary structure, homotetramer. Forms a complex with KbaZ. The cofactor is Zn(2+).

The enzyme catalyses D-tagatofuranose 1,6-bisphosphate = D-glyceraldehyde 3-phosphate + dihydroxyacetone phosphate. It functions in the pathway carbohydrate metabolism; D-tagatose 6-phosphate degradation; D-glyceraldehyde 3-phosphate and glycerone phosphate from D-tagatose 6-phosphate: step 2/2. Functionally, catalytic subunit of the tagatose-1,6-bisphosphate aldolase KbaYZ, which catalyzes the reversible aldol condensation of dihydroxyacetone phosphate (DHAP or glycerone-phosphate) with glyceraldehyde 3-phosphate (G3P) to produce tagatose 1,6-bisphosphate (TBP). Requires KbaZ subunit for full activity and stability. The protein is D-tagatose-1,6-bisphosphate aldolase subunit KbaY of Salmonella arizonae (strain ATCC BAA-731 / CDC346-86 / RSK2980).